Reading from the N-terminus, the 876-residue chain is DNA topoisomerase 1 (876 aa).

The Toprim domain occupies 3–150 (KSLVIVESPA…RYKRVVFNEI (148 aa)). Glutamate 9 lines the Mg(2+) pocket. Residues 37-69 (LPTAGQTATPTGKAAAASTKKASTTDKEQQKRE) form a disordered region. A compositionally biased stretch (low complexity) spans 38–58 (PTAGQTATPTGKAAAASTKKA). Residues 59–69 (STTDKEQQKRE) show a composition bias toward basic and acidic residues. Aspartate 119 provides a ligand contact to Mg(2+). Positions 166–582 (NMDGVNAQQA…EFFADFSRDL (417 aa)) constitute a Topo IA-type catalytic domain. The interaction with DNA stretch occupies residues 200 to 205 (SAGRVQ). Tyrosine 327 serves as the catalytic O-(5'-phospho-DNA)-tyrosine intermediate. 2 consecutive C4-type zinc fingers follow at residues 668–695 (CPICETAMDAYLIDDKRKLHVCGNNPNC) and 717–742 (CDKCGSDMVLKNGRFGKYMGCTNDAC).

It belongs to the type IA topoisomerase family. As to quaternary structure, monomer. Mg(2+) serves as cofactor.

The catalysed reaction is ATP-independent breakage of single-stranded DNA, followed by passage and rejoining.. In terms of biological role, releases the supercoiling and torsional tension of DNA, which is introduced during the DNA replication and transcription, by transiently cleaving and rejoining one strand of the DNA duplex. Introduces a single-strand break via transesterification at a target site in duplex DNA. The scissile phosphodiester is attacked by the catalytic tyrosine of the enzyme, resulting in the formation of a DNA-(5'-phosphotyrosyl)-enzyme intermediate and the expulsion of a 3'-OH DNA strand. The free DNA strand then undergoes passage around the unbroken strand, thus removing DNA supercoils. Finally, in the religation step, the DNA 3'-OH attacks the covalent intermediate to expel the active-site tyrosine and restore the DNA phosphodiester backbone. The chain is DNA topoisomerase 1 from Vibrio cholerae serotype O1 (strain ATCC 39315 / El Tor Inaba N16961).